The primary structure comprises 961 residues: MEVPAAGRVPAEGAPTAAVAEVRCPGPAPLRLLEWRVAAGAAVRIGSVLAVFEAAASAQSSGASQSRVASGGCVRPARPERRLRSERAGVVRELCAQPGQVVAPGAVLVRLEGCSHPVVMKGLCAECGQDLTQLQSKNGKQQVPLSTATVSMVHSVPELMVSSEQAEQLGREDQQRLHRNRKLVLMVDLDQTLIHTTEQHCQQMSNKGIFHFQLGRGEPMLHTRLRPHCKDFLEKIAKLYELHVFTFGSRLYAHTIAGFLDPEKKLFSHRILSRDECIDPFSKTGNLRNLFPCGDSMVCIIDDREDVWKFAPNLITVKKYVYFQGTGDMNAPPGSRESQTRKKVNHSRGTEVSEPSPPVRDPEGVTQAPGVEPSNGLEKPARELNGSEAATPRDSPRPGKPDERDIWPPAQAPTSSQELAGAPEPQGSCAQGGRVAPGQRPAQGATGTDLDFDLSSDSESSSESEGTKSSSSASDGESEGKRGRQKPKAAPEGAGALAQGSSLEPGRPAAPSLPGEAEPGAHAPDKEPELGGQEEGERDGLCGLGNGCADRKEAETESQNSELSGVTAGESLDQSMEEEEEEDTDEDDHLIYLEEILVRVHTDYYAKYDRYLNKEIEEAPDIRKIVPELKSKVLADVAIIFSGLHPTNFPIEKTREHYHATALGAKILTRLVLSPDAPDRATHLIAARAGTEKVLQAQECGHLHVVNPDWLWSCLERWDKVEEQLFPLRDDHTKAQRENSPAAFPDREGVPPTALFHPMPVLPKAQPGPEVRIYDSNTGKLIRTGARGPPAPSSSLPIRQEPSSFRAVPPPQPQMFGEELPDAQDGEQPGPSRRKRQPSMSETMPLYTLCKEDLESMDKEVDDILGEGSDDSDSEKRRPEEQEEEPQPRKPGTRRERTLGAPASSERSAAGGRGPRGHKRKLNEEDAASESSRESSNEDEGSSSEADEMAKALEAELNDLM.

Met-1 carries the post-translational modification N-acetylmethionine. One can recognise an FCP1 homology domain in the interval 178–344; that stretch reads HRNRKLVLMV…SRESQTRKKV (167 aa). A disordered region spans residues 328–589; the sequence is DMNAPPGSRE…EEEDTDEDDH (262 aa). Residues 394-406 show a composition bias toward basic and acidic residues; the sequence is DSPRPGKPDERDI. Ser-395 is subject to Phosphoserine. A compositionally biased stretch (acidic residues) spans 450 to 462; that stretch reads LDFDLSSDSESSS. A compositionally biased stretch (low complexity) spans 463-475; sequence ESEGTKSSSSASD. Over residues 575-588 the composition is skewed to acidic residues; sequence SMEEEEEEDTDEDD. The BRCT domain maps to 629–728; the sequence is LKSKVLADVA…DKVEEQLFPL (100 aa). 2 positions are modified to phosphoserine: Ser-674 and Ser-740. 2 disordered regions span residues 730 to 752 and 780 to 949; these read DDHT…GVPP and KLIR…ADEM. Lys-780 is subject to N6-acetyllysine. Over residues 793–803 the composition is skewed to polar residues; the sequence is SSSLPIRQEPS. Phosphoserine is present on Ser-839. The segment covering 850 to 859 has biased composition (basic and acidic residues); the sequence is CKEDLESMDK. Acidic residues-rich tracts occupy residues 860–873 and 937–947; these read EVDD…DDSD and NEDEGSSSEAD. 2 positions are modified to phosphoserine: Ser-869 and Ser-872.

Homodimer. Interacts with GTF2F1. Interacts with WDR77, SNRPB and SNRNP70. Phosphorylated. In the presence of TFIIF, the phosphorylated form has an increased CTD phosphatase activity. The phosphorylation is required for the physical interaction with GTF2F1. Ubiquitously expressed.

It localises to the nucleus. The protein resides in the cytoplasm. It is found in the cytoskeleton. Its subcellular location is the microtubule organizing center. The protein localises to the centrosome. It localises to the spindle pole. The protein resides in the midbody. The catalysed reaction is O-phospho-L-seryl-[protein] + H2O = L-seryl-[protein] + phosphate. It catalyses the reaction O-phospho-L-threonyl-[protein] + H2O = L-threonyl-[protein] + phosphate. Processively dephosphorylates 'Ser-2' and 'Ser-5' of the heptad repeats YSPTSPS in the C-terminal domain of the largest RNA polymerase II subunit. This promotes the activity of RNA polymerase II. Plays a role in the exit from mitosis by dephosphorylating crucial mitotic substrates (USP44, CDC20 and WEE1) that are required for M-phase-promoting factor (MPF)/CDK1 inactivation. This Homo sapiens (Human) protein is RNA polymerase II subunit A C-terminal domain phosphatase (CTDP1).